The following is a 303-amino-acid chain: UDP-3-O-acyl-N-acetylglucosamine deacetylase (303 aa).

Positions 78, 237, and 241 each coordinate Zn(2+). The active-site Proton donor is histidine 264.

This sequence belongs to the LpxC family. The cofactor is Zn(2+).

It carries out the reaction a UDP-3-O-[(3R)-3-hydroxyacyl]-N-acetyl-alpha-D-glucosamine + H2O = a UDP-3-O-[(3R)-3-hydroxyacyl]-alpha-D-glucosamine + acetate. It functions in the pathway glycolipid biosynthesis; lipid IV(A) biosynthesis; lipid IV(A) from (3R)-3-hydroxytetradecanoyl-[acyl-carrier-protein] and UDP-N-acetyl-alpha-D-glucosamine: step 2/6. Functionally, catalyzes the hydrolysis of UDP-3-O-myristoyl-N-acetylglucosamine to form UDP-3-O-myristoylglucosamine and acetate, the committed step in lipid A biosynthesis. In Xanthomonas campestris pv. campestris (strain B100), this protein is UDP-3-O-acyl-N-acetylglucosamine deacetylase.